The following is a 122-amino-acid chain: Proximal tubules-expressed gene protein (122 aa).

The helical transmembrane segment at 33 to 53 (WLTGLIAMTVFLFLVLVVYVA) threads the bilayer.

It belongs to the PDZK1-interacting protein 1/SMIM24 family. In terms of tissue distribution, expressed in prospective pronephric mesoderm at the late gastrula stage. After neurulation, expressed in the intermediate mesoderm, eye placode and blood islands. Expression becomes restricted to the pronephric proximal tubule during embryogenesis, but is absent from the connecting tubules.

Its subcellular location is the membrane. Functionally, essential for pronephric tubule development, acting upstream of pax8 and lhx1/lim1 and downstream of retinoic acid signaling to induce pronephric mesoderm to form pronephric tubule-specific cells. The chain is Proximal tubules-expressed gene protein (pteg) from Xenopus laevis (African clawed frog).